Consider the following 479-residue polypeptide: Mannose-1-phosphate guanylyltransferase RfbM (479 aa).

Belongs to the mannose-6-phosphate isomerase type 2 family. In terms of assembly, homodimer.

The catalysed reaction is alpha-D-mannose 1-phosphate + GTP + H(+) = GDP-alpha-D-mannose + diphosphate. It functions in the pathway nucleotide-sugar biosynthesis; GDP-alpha-D-mannose biosynthesis; GDP-alpha-D-mannose from alpha-D-mannose 1-phosphate (GTP route): step 1/1. The protein operates within bacterial outer membrane biogenesis; LPS O-antigen biosynthesis. Functionally, involved in GDP-mannose biosynthesis which serves as the activated sugar nucleotide precursor for mannose residues in cell surface polysaccharides. This enzyme participates in synthesis of the LPS group B O antigen. The chain is Mannose-1-phosphate guanylyltransferase RfbM (rfbM) from Salmonella typhimurium (strain LT2 / SGSC1412 / ATCC 700720).